We begin with the raw amino-acid sequence, 219 residues long: Orotate phosphoribosyltransferase (219 aa).

K26 lines the 5-phospho-alpha-D-ribose 1-diphosphate pocket. An orotate-binding site is contributed by 34-35; sequence FF. Residues 72 to 73, R98, K99, K102, H104, and 124 to 132 contribute to the 5-phospho-alpha-D-ribose 1-diphosphate site; these read YK and DDVITAGTA. Residues T128 and R156 each coordinate orotate.

The protein belongs to the purine/pyrimidine phosphoribosyltransferase family. PyrE subfamily. Homodimer. Mg(2+) serves as cofactor.

It carries out the reaction orotidine 5'-phosphate + diphosphate = orotate + 5-phospho-alpha-D-ribose 1-diphosphate. The protein operates within pyrimidine metabolism; UMP biosynthesis via de novo pathway; UMP from orotate: step 1/2. Its function is as follows. Catalyzes the transfer of a ribosyl phosphate group from 5-phosphoribose 1-diphosphate to orotate, leading to the formation of orotidine monophosphate (OMP). This chain is Orotate phosphoribosyltransferase, found in Xanthomonas oryzae pv. oryzae (strain MAFF 311018).